We begin with the raw amino-acid sequence, 99 residues long: UPF0751 protein BCE_A0020 (99 aa).

Belongs to the UPF0751 family.

The protein is UPF0751 protein BCE_A0020 of Bacillus cereus (strain ATCC 10987 / NRS 248).